We begin with the raw amino-acid sequence, 194 residues long: Anthranilate synthase component 2 (194 aa).

The Glutamine amidotransferase type-1 domain occupies 2 to 194; the sequence is KIFFIDNFDS…QSVGFLRELS (193 aa). 57–59 is a binding site for L-glutamine; that stretch reads GPG. C84 serves as the catalytic Nucleophile; for GATase activity. L-glutamine is bound by residues Q88 and 134 to 135; that span reads SL. Active-site for GATase activity residues include H170 and E172.

Heterotetramer consisting of two non-identical subunits: a beta subunit (TrpG) and a large alpha subunit (TrpE).

It carries out the reaction chorismate + L-glutamine = anthranilate + pyruvate + L-glutamate + H(+). It functions in the pathway amino-acid biosynthesis; L-tryptophan biosynthesis; L-tryptophan from chorismate: step 1/5. Its function is as follows. Part of a heterotetrameric complex that catalyzes the two-step biosynthesis of anthranilate, an intermediate in the biosynthesis of L-tryptophan. In the first step, the glutamine-binding beta subunit (TrpG) of anthranilate synthase (AS) provides the glutamine amidotransferase activity which generates ammonia as a substrate that, along with chorismate, is used in the second step, catalyzed by the large alpha subunit of AS (TrpE) to produce anthranilate. In the absence of TrpG, TrpE can synthesize anthranilate directly from chorismate and high concentrations of ammonia. This is Anthranilate synthase component 2 (trpG) from Helicobacter pylori (strain J99 / ATCC 700824) (Campylobacter pylori J99).